The primary structure comprises 312 residues: Methionyl-tRNA formyltransferase (312 aa).

A (6S)-5,6,7,8-tetrahydrofolate-binding site is contributed by 109-112 (SLLP).

Belongs to the Fmt family.

The enzyme catalyses L-methionyl-tRNA(fMet) + (6R)-10-formyltetrahydrofolate = N-formyl-L-methionyl-tRNA(fMet) + (6S)-5,6,7,8-tetrahydrofolate + H(+). Functionally, attaches a formyl group to the free amino group of methionyl-tRNA(fMet). The formyl group appears to play a dual role in the initiator identity of N-formylmethionyl-tRNA by promoting its recognition by IF2 and preventing the misappropriation of this tRNA by the elongation apparatus. This is Methionyl-tRNA formyltransferase from Anaeromyxobacter dehalogenans (strain 2CP-1 / ATCC BAA-258).